A 227-amino-acid polypeptide reads, in one-letter code: Chloronitrobenzene nitroreductase (227 aa).

Residue 14 to 18 (RRTKR) participates in FMN binding. S44 contributes to the NADP(+) binding site. FMN-binding positions include 172-173 (GL) and R215.

The protein belongs to the nitroreductase family. FMN serves as cofactor.

It carries out the reaction N-phenylhydroxylamine + 2 NADP(+) + H2O = nitrobenzene + 2 NADPH + 2 H(+). The protein operates within xenobiotic degradation; nitrobenzene degradation. It functions in the pathway xenobiotic degradation; 4-chloronitrobenzene degradation. Its function is as follows. Involved in the biodegradation of chlorinated nitroaromatic compounds. Catalyzes the reduction of 4-chloronitrobenzene to yield 1-hydroxylamino-4-chlorobenzene. Probably also able to catalyze the two-electron reduction of nitrobenzene (NB) to produce a nitrosobenzene (NOB) intermediate, which is immediately reduced to hydroxylaminobenzene (HAB) by a second two-electron transfer. This is Chloronitrobenzene nitroreductase from Comamonas testosteroni (Pseudomonas testosteroni).